Reading from the N-terminus, the 102-residue chain is uncharacterized protein (102 aa).

This sequence belongs to the Gram-positive plasmids replication protein type 2 family.

This is an uncharacterized protein from Staphylococcus aureus.